The chain runs to 259 residues: Global transcriptional regulator CodY (259 aa).

A GAF domain region spans residues 1–155 (MALLQKTRII…GATVVGMEIL (155 aa)). The H-T-H motif DNA-binding region spans 203–222 (ASKIADRVGITRSVIVNALR). At Ser215 the chain carries Phosphoserine.

It belongs to the CodY family.

Its subcellular location is the cytoplasm. Functionally, DNA-binding global transcriptional regulator which is involved in the adaptive response to starvation and acts by directly or indirectly controlling the expression of numerous genes in response to nutrient availability. During rapid exponential growth, CodY is highly active and represses genes whose products allow adaptation to nutrient depletion. This Bacillus velezensis (strain DSM 23117 / BGSC 10A6 / LMG 26770 / FZB42) (Bacillus amyloliquefaciens subsp. plantarum) protein is Global transcriptional regulator CodY.